Reading from the N-terminus, the 161-residue chain is E3 ubiquitin ligase complex SCF subunit sconC (161 aa).

The interval 102-161 is interaction with the F-box domain of F-box proteins; it reads ILAANYLDIKPLLDIGCKTVANMIKGKSPEEIRKTFNIQNDFTPEEEDQIRRENEWAEDR.

This sequence belongs to the SKP1 family. As to quaternary structure, component of the SCF (SKP1-CUL1-F-box protein) E3 ubiquitin ligase complexes.

The protein operates within protein modification; protein ubiquitination. Essential component of the SCF (SKP1-CUL1-F-box protein) E3 ubiquitin ligase complexes, which mediate the ubiquitination and subsequent proteasomal degradation of target proteins. Controls sulfur metabolite repression, probably by mediating the inactivation or degradation of the metR transcription factor. In Emericella nidulans (strain FGSC A4 / ATCC 38163 / CBS 112.46 / NRRL 194 / M139) (Aspergillus nidulans), this protein is E3 ubiquitin ligase complex SCF subunit sconC (sconC).